The primary structure comprises 320 residues: Ribosomal RNA small subunit methyltransferase H (320 aa).

S-adenosyl-L-methionine-binding positions include 42-44 (GGH), aspartate 62, phenylalanine 86, aspartate 108, and glutamine 115.

This sequence belongs to the methyltransferase superfamily. RsmH family.

The protein localises to the cytoplasm. The enzyme catalyses cytidine(1402) in 16S rRNA + S-adenosyl-L-methionine = N(4)-methylcytidine(1402) in 16S rRNA + S-adenosyl-L-homocysteine + H(+). Its function is as follows. Specifically methylates the N4 position of cytidine in position 1402 (C1402) of 16S rRNA. The protein is Ribosomal RNA small subunit methyltransferase H of Yersinia enterocolitica serotype O:8 / biotype 1B (strain NCTC 13174 / 8081).